Here is a 279-residue protein sequence, read N- to C-terminus: Large ribosomal subunit protein uL2 (279 aa).

Disordered stretches follow at residues 29 to 53 (PEKS…TTRH) and 224 to 279 (VAMN…KKRK). A compositionally biased stretch (basic and acidic residues) spans 253-268 (KEGRTRHPNKESDKLI). Over residues 269–279 (VRRRNAGKKRK) the composition is skewed to basic residues.

Belongs to the universal ribosomal protein uL2 family. Part of the 50S ribosomal subunit. Forms a bridge to the 30S subunit in the 70S ribosome.

Its function is as follows. One of the primary rRNA binding proteins. Required for association of the 30S and 50S subunits to form the 70S ribosome, for tRNA binding and peptide bond formation. It has been suggested to have peptidyltransferase activity; this is somewhat controversial. Makes several contacts with the 16S rRNA in the 70S ribosome. The sequence is that of Large ribosomal subunit protein uL2 from Leifsonia xyli subsp. xyli (strain CTCB07).